A 420-amino-acid chain; its full sequence is Proteasome-activating nucleotidase (420 aa).

The interval 1–25 is disordered; that stretch reads MRSHLVKPGSVYDGIEPGELGETTE. The stretch at 22 to 79 forms a coiled coil; the sequence is ETTESVQDRVRQLESRNSFLEEQCSQIESEKRYLENQKIKYEREIRKLQSELDRMKTS. ATP is bound by residues 203–208 and H342; that span reads GTGKTL. The interval 418–420 is docks into pockets in the proteasome alpha-ring to cause gate opening; it reads MFV.

The protein belongs to the AAA ATPase family. Homohexamer. The hexameric complex has a two-ring architecture resembling a top hat that caps the 20S proteasome core at one or both ends. Upon ATP-binding, the C-terminus of PAN interacts with the alpha-rings of the proteasome core by binding to the intersubunit pockets.

It localises to the cytoplasm. In terms of biological role, ATPase which is responsible for recognizing, binding, unfolding and translocation of substrate proteins into the archaeal 20S proteasome core particle. Is essential for opening the gate of the 20S proteasome via an interaction with its C-terminus, thereby allowing substrate entry and access to the site of proteolysis. Thus, the C-termini of the proteasomal ATPase function like a 'key in a lock' to induce gate opening and therefore regulate proteolysis. Unfolding activity requires energy from ATP hydrolysis, whereas ATP binding alone promotes ATPase-20S proteasome association which triggers gate opening, and supports translocation of unfolded substrates. The polypeptide is Proteasome-activating nucleotidase (Methanosarcina mazei (strain ATCC BAA-159 / DSM 3647 / Goe1 / Go1 / JCM 11833 / OCM 88) (Methanosarcina frisia)).